The chain runs to 162 residues: Phycoerythrocyanin alpha chain (162 aa).

Cys84 contributes to the (15Z)-phycoviolobilin binding site.

This sequence belongs to the phycobiliprotein family. In terms of assembly, heterodimer of an alpha and a beta chain. Contains one covalently linked bilin chromophore.

The protein resides in the cellular thylakoid membrane. Light-harvesting photosynthetic bile pigment-protein from the phycobiliprotein complex. The sequence is that of Phycoerythrocyanin alpha chain (pecA) from Nostoc sp. (strain PCC 7120 / SAG 25.82 / UTEX 2576).